A 455-amino-acid polypeptide reads, in one-letter code: Probable circularly permuted 1,3-beta-glucanase TOS1 (455 aa).

The N-terminal stretch at 1-23 (MLQKLSMTALVGLFSSVVSLVNA) is a signal peptide. The disordered stretch occupies residues 158-221 (TADSTNTVVG…SSSSSSNTNG (64 aa)). Residues 172-189 (SSYTKDSTVLSSSAQAVE) are compositionally biased toward polar residues. The span at 190–219 (TSESQSSISSSKTTSSAAAASSSSSSSSNT) shows a compositional bias: low complexity. Asparagine 236 carries N-linked (GlcNAc...) asparagine glycosylation. Residues 372–377 (EMDLFE) carry the ExDxxE motif motif. Asparagine 417 carries an N-linked (GlcNAc...) asparagine glycan.

It belongs to the PGA52 family.

It is found in the secreted. It localises to the cell wall. It catalyses the reaction Hydrolysis of (1-&gt;3)-beta-D-glucosidic linkages in (1-&gt;3)-beta-D-glucans.. Functionally, probable circularly permuted 1,3-beta-glucanase involved in cell wall modification through beta-1,3-glucan network alterations such as increased branching or remodeling. In Saccharomyces cerevisiae (strain ATCC 204508 / S288c) (Baker's yeast), this protein is Probable circularly permuted 1,3-beta-glucanase TOS1.